The chain runs to 459 residues: Heat stress transcription factor A-4d (459 aa).

Positions 127 to 189 form a coiled coil; it reads AESERRELEE…QKNIVASLCE (63 aa). The hydrophobic repeat HR-A/B stretch occupies residues 141 to 191; that stretch reads LKYEKSILVADLQRQNQQQYVINWQMQAMEGRLVAMEQRQKNIVASLCEML. The short motif at 209-213 is the Nuclear localization signal element; sequence SKKRR. Polar residues predominate over residues 364–388; it reads YPTQADVNSEIASSTDTSQDGTSET. The segment at 364-398 is disordered; the sequence is YPTQADVNSEIASSTDTSQDGTSETEASHGPTNDV. The AHA motif lies at 397–406; the sequence is DVFWERFLTE.

It belongs to the HSF family. Class A subfamily. Homotrimer. Exhibits temperature-dependent phosphorylation.

Its subcellular location is the nucleus. Transcriptional regulator that specifically binds DNA of heat shock promoter elements (HSE). The protein is Heat stress transcription factor A-4d (HSFA4D) of Oryza sativa subsp. japonica (Rice).